Reading from the N-terminus, the 418-residue chain is Actin-related protein 3-A (418 aa).

Belongs to the actin family. ARP3 subfamily. In terms of assembly, component of the Arp2/3 complex composed of actr2/arp2, actr3/arp3, arpc1 (arpc1a or arpc1b), arpc2, arpc3, arpc4 and arpc5.

The protein resides in the cytoplasm. It localises to the cytoskeleton. Its subcellular location is the cell projection. The protein localises to the nucleus. In terms of biological role, ATP-binding component of the Arp2/3 complex, a multiprotein complex that mediates actin polymerization upon stimulation by nucleation-promoting factor (NPF). The Arp2/3 complex mediates the formation of branched actin networks in the cytoplasm, providing the force for cell motility. Seems to contact the pointed end of the daughter actin filament. In addition to its role in the cytoplasmic cytoskeleton, the Arp2/3 complex also promotes actin polymerization in the nucleus, thereby regulating gene transcription and repair of damaged DNA. The Arp2/3 complex promotes homologous recombination (HR) repair in response to DNA damage by promoting nuclear actin polymerization, leading to drive motility of double-strand breaks (DSBs). The protein is Actin-related protein 3-A of Xenopus laevis (African clawed frog).